A 364-amino-acid polypeptide reads, in one-letter code: Spermidine/putrescine import ATP-binding protein PotA (364 aa).

Residues 5-235 form the ABC transporter domain; that stretch reads LSFKDVSKGF…PVNRFVADFI (231 aa). Position 37-44 (37-44) interacts with ATP; that stretch reads GPSGCGKT.

This sequence belongs to the ABC transporter superfamily. Spermidine/putrescine importer (TC 3.A.1.11.1) family. The complex is composed of two ATP-binding proteins (PotA), two transmembrane proteins (PotB and PotC) and a solute-binding protein (PotD).

Its subcellular location is the cell membrane. The catalysed reaction is ATP + H2O + polyamine-[polyamine-binding protein]Side 1 = ADP + phosphate + polyamineSide 2 + [polyamine-binding protein]Side 1.. In terms of biological role, part of the ABC transporter complex PotABCD involved in spermidine/putrescine import. Responsible for energy coupling to the transport system. The chain is Spermidine/putrescine import ATP-binding protein PotA from Staphylococcus epidermidis (strain ATCC 12228 / FDA PCI 1200).